A 330-amino-acid chain; its full sequence is Nitrilase 3 (330 aa).

The CN hydrolase domain maps to 4 to 273; that stretch reads VKAAAVQISP…EGEVIVDLDF (270 aa). The active-site Proton acceptor is the Glu-44. Lys-128 functions as the Proton donor in the catalytic mechanism. Catalysis depends on Cys-162, which acts as the Nucleophile. Positions 310-330 are disordered; sequence RAAHPVSGAEQGPEDLRTPAA.

The protein belongs to the carbon-nitrogen hydrolase superfamily. Nitrilase family.

The catalysed reaction is a nitrile + 2 H2O = a carboxylate + NH4(+). Its function is as follows. Nitrilases catalyze the mild hydrolytic conversion of organonitriles directly to the corresponding carboxylic acids. In Unknown prokaryotic organism, this protein is Nitrilase 3.